We begin with the raw amino-acid sequence, 109 residues long: U4-lycotoxin-Ls1d (109 aa).

The first 22 residues, Met-1–Ala-22, serve as a signal peptide directing secretion. The propeptide occupies Met-23 to Arg-44. The tract at residues Ala-45 to Cys-88 is knottin domain. 4 cysteine pairs are disulfide-bonded: Cys-48–Cys-63, Cys-55–Cys-72, Cys-62–Cys-88, and Cys-74–Cys-86. The segment at Gln-89 to Val-108 is linear cationic cytotoxin domain.

It belongs to the neurotoxin 19 (CSTX) family. 05 (U4-Lctx) subfamily. In terms of tissue distribution, expressed by the venom gland.

The protein resides in the secreted. Enhances the high-affinity desensitization of human P2RX3 purinoceptors. The sequence is that of U4-lycotoxin-Ls1d from Lycosa singoriensis (Wolf spider).